The following is a 232-amino-acid chain: H-2 class II histocompatibility antigen, E-S beta chain (232 aa).

Positions 1-90 are beta-1; sequence WFLEYSTSEC…LDKFLVPRRV (90 aa). At 1–193 the chain is on the extracellular side; the sequence is WFLEYSTSEC…KAQSTSAQNK (193 aa). 2 disulfides stabilise this stretch: C10–C74 and C112–C168. N14 carries an N-linked (GlcNAc...) asparagine glycan. The interval 91-193 is beta-2; sequence EPTVTVYPTK…KAQSTSAQNK (103 aa). The 91-residue stretch at 92-182 folds into the Ig-like C1-type domain; that stretch reads PTVTVYPTKT…PSLTDPVTVE (91 aa). Residues 194–216 form a helical membrane-spanning segment; it reads MLSGVGGFVLGLLFLGAGLFIYF. The Cytoplasmic segment spans residues 217-232; that stretch reads RNQKGQSGLQPTGLLS.

Belongs to the MHC class II family. Post-translationally, ubiquitinated in immature dendritic cells leading to down-regulation of MHC class II.

The protein localises to the membrane. The sequence is that of H-2 class II histocompatibility antigen, E-S beta chain (H2-Eb1) from Mus musculus (Mouse).